We begin with the raw amino-acid sequence, 618 residues long: Protease 4 (618 aa).

The Cytoplasmic segment spans residues 1-24 (MRTLWRFIAGFFKWTWRLLNFVRE). The helical transmembrane segment at 25-45 (MVLNLFFIFLVLVGVGIWMQV) threads the bilayer. Over 46 to 618 (SGGDSKETAS…AFCLTCANMR (573 aa)) the chain is Periplasmic. Catalysis depends on Lys-209, which acts as the Proton donor/acceptor. Ser-409 acts as the Nucleophile in catalysis.

The protein belongs to the peptidase S49 family. In terms of assembly, homotetramer.

Its subcellular location is the cell inner membrane. With respect to regulation, inhibited by serine hydrolase inhibitor FP-biotin and by antipain. Digests cleaved signal peptides in vitro, its in vivo function is unknown. This activity is necessary to maintain proper secretion of mature proteins across the membrane. This is Protease 4 (sppA) from Escherichia coli (strain K12).